The following is a 2451-amino-acid chain: Reducing polyketide synthase 8 (2451 aa).

The 423-residue stretch at 12-434 (NEPIAIVGSS…GTNAHAILEA (423 aa)) folds into the Ketosynthase family 3 (KS3) domain. Active-site for beta-ketoacyl synthase activity residues include cysteine 174, histidine 313, and histidine 354. In terms of domain architecture, Malonyl-CoA:ACP transacylase (MAT) spans 538 to 846 (VFTGQGAQWA…GPATETINNM (309 aa)). The interval 940 to 1085 (HQLLGSASTF…GFLRIELGAP (146 aa)) is N-terminal hotdog fold. In terms of domain architecture, PKS/mFAS DH spans 940–1254 (HQLLGSASTF…LLNLPGSLRS (315 aa)). The Proton acceptor; for dehydratase activity role is filled by histidine 974. Residues 1100-1254 (LIPLDVEELY…LLNLPGSLRS (155 aa)) are C-terminal hotdog fold. The active-site Proton donor; for dehydratase activity is the aspartate 1160. Residues 1294–1590 (LVLFYCQKVL…QHFCSVMLSQ (297 aa)) form a methyltransfrase (MT) domain region. The region spanning 2088-2266 (TYLLLGLAGD…PGCVVHIGGV (179 aa)) is the Ketoreductase (KR) domain. The Carrier domain occupies 2366–2451 (DACLDLLLGG…LAIWRKQVKA (86 aa)). Serine 2404 carries the O-(pantetheine 4'-phosphoryl)serine modification.

It depends on pantetheine 4'-phosphate as a cofactor.

Its pathway is secondary metabolite biosynthesis. In terms of biological role, reducing polyketide synthase; part of the gene cluster that mediates the biosynthesis of fusamarins, isocoumarin derivatives that show moderate cytotoxicity with IC(50) values between 1 and 50 uM. The polyketide synthase FMN1 probably synthesizes two different polyketides, a tetra- and a pentaketide, containinga varying number of double bonds depending on the selective actions of the trans-enoyl reductase FMN2. Chain fusion will presumably be mediated by the KS domain before finally offloading is catalyzed by the alpha/beta hydrolase fold enzyme FMN3. This Fusarium mangiferae (Mango malformation disease fungus) protein is Reducing polyketide synthase 8.